A 711-amino-acid polypeptide reads, in one-letter code: Ferric reductase transmembrane component 3 (711 aa).

The first 20 residues, 1–20 (MYWVLLCGSILLCCLSGASA), serve as a signal peptide directing secretion. Residues 21–166 (SPAKTKMYGK…YANYDIGHTY (146 aa)) lie on the Extracellular side of the membrane. N85, N108, N120, and N134 each carry an N-linked (GlcNAc...) asparagine glycan. Residues 167–187 (GGIICAYFVGVMILASILHYL) form a helical membrane-spanning segment. Residues 188-237 (SYTPFKTALFKQRLVRYVRRYLTIPTIWGKHASSFSYLKIFTGFLPTRSE) lie on the Cytoplasmic side of the membrane. The chain crosses the membrane as a helical span at residues 238 to 258 (GVIILGYLVLHTVFLAYGYQY). Residues 259-280 (DPYNLIFDSRREQIARYVADRS) lie on the Extracellular side of the membrane. Positions 280-414 (SGVLAFAHFP…SGIEWIYAAI (135 aa)) constitute a Ferric oxidoreductase domain. The chain crosses the membrane as a helical span at residues 281–301 (GVLAFAHFPLIALFAGRNNFL). The Cytoplasmic segment spans residues 302 to 321 (EFISGVKYTSFIMFHKWLGR). Heme contacts are provided by H316 and H330. Residues 322 to 341 (MMFLDAVIHGAAYTSYSVFY) form a helical membrane-spanning segment. Residues 342–353 (KDWAASKEETYW) lie on the Extracellular side of the membrane. The helical transmembrane segment at 354 to 374 (QFGVAALCIVGVMVFFSLAMF) threads the bilayer. The Cytoplasmic portion of the chain corresponds to 375 to 376 (RK). The chain crosses the membrane as a helical span at residues 377–397 (FFYEAFLFLHIVLGALFFYTC). H386 provides a ligand contact to heme. W398 is a topological domain (extracellular). The helical transmembrane segment at 399 to 419 (EHVVELSGIEWIYAAIAIWTI) threads the bilayer. Heme is bound at residue H400. In terms of domain architecture, FAD-binding FR-type spans 415 to 534 (AIWTIDRLIR…EGPYGSSSPV (120 aa)). Residues 420-711 (DRLIRIVRVS…IEYFEEYQSW (292 aa)) lie on the Cytoplasmic side of the membrane. Position 479–485 (479–485 (HPFTVLD)) interacts with FAD. NADP(+) contacts are provided by residues 526 to 529 (GPYG) and 677 to 678 (CG).

This sequence belongs to the ferric reductase (FRE) family. Requires FAD as cofactor. The cofactor is heme.

The protein localises to the cell membrane. The enzyme catalyses 2 a Fe(II)-siderophore + NADP(+) + H(+) = 2 a Fe(III)-siderophore + NADPH. Its function is as follows. Siderophore-iron reductase responsible for reducing extracellular iron prior to import. Catalyzes the reductive uptake of Fe(3+) bound to di- and trihydroxamate siderophores. Fe(3+) is reduced to Fe(2+), which then dissociates from the siderophore and can be imported by the high-affinity Fe(2+) transport complex in the plasma membrane. This is Ferric reductase transmembrane component 3 (FRE3) from Saccharomyces cerevisiae (strain ATCC 204508 / S288c) (Baker's yeast).